A 310-amino-acid polypeptide reads, in one-letter code: Putative methyltransferase mtx subunit H (310 aa).

It belongs to the MtrH family. As to quaternary structure, may be part of a complex composed of 3 subunits; MtxA, MtxH and MtxX.

The sequence is that of Putative methyltransferase mtx subunit H (mtxH) from Methanosarcina barkeri (strain Fusaro / DSM 804).